Reading from the N-terminus, the 319-residue chain is Protein sprouty homolog 1 (319 aa).

At Met1 the chain carries N-acetylmethionine. Disordered stretches follow at residues 54–78 (TEGPSVVKRPAPRTAPRQEKHERTH) and 100–160 (AVLP…QPKQ). The span at 69–78 (PRQEKHERTH) shows a compositional bias: basic and acidic residues. The span at 112–131 (SRSTSTGSAASSGSNSSASS) shows a compositional bias: low complexity. The 113-residue stretch at 183–295 (QCGKCKCGEC…CYDWIHRPGC (113 aa)) folds into the SPR domain.

This sequence belongs to the sprouty family. As to quaternary structure, forms heterodimers with SPRY2. Interacts with TESK1. Interacts with CAV1 (via C-terminus).

It localises to the cytoplasm. It is found in the membrane. Inhibits fibroblast growth factor (FGF)-induced retinal lens fiber differentiation, probably by inhibiting FGF-mediated phosphorylation of ERK1/2. Inhibits TGFB-induced epithelial-to-mesenchymal transition in lens epithelial cells. The chain is Protein sprouty homolog 1 (SPRY1) from Homo sapiens (Human).